The primary structure comprises 261 residues: Glucanase inhibitor protein 3 (261 aa).

Residues 1–21 form the signal peptide; that stretch reads MKVLSSLAAALIALSAVDVEA. Positions 29-260 constitute a Peptidase S1 domain; it reads ILGGGKVPVG…GIEWINSVIK (232 aa). An intrachain disulfide couples C56 to C72. A glycan (N-linked (GlcNAc...) asparagine) is linked at N108. Cystine bridges form between C183/C195 and C205/C236.

The protein belongs to the peptidase S1 family.

The protein resides in the secreted. In terms of biological role, secreted effector that suppresses host plant glucan elicitor-mediated defense responses. Targets host endoglucanases and inhibits the endoglucanase-mediated release of elicitor-active glucan oligosaccharides from P.sojae cell walls. The sequence is that of Glucanase inhibitor protein 3 (GIP3) from Phytophthora sojae (strain P6497) (Soybean stem and root rot agent).